Here is a 1049-residue protein sequence, read N- to C-terminus: Multidrug efflux pump subunit AcrB (1049 aa).

The Cytoplasmic segment spans residues methionine 1 to proline 9. The chain crosses the membrane as a helical span at residues isoleucine 10–leucine 28. Residues lysine 29–serine 336 are Periplasmic-facing. A helical transmembrane segment spans residues isoleucine 337–tyrosine 356. The Cytoplasmic portion of the chain corresponds to leucine 357 to threonine 365. A helical membrane pass occupies residues leucine 366 to alanine 385. Residues phenylalanine 386–asparagine 391 lie on the Periplasmic side of the membrane. The chain crosses the membrane as a helical span at residues threonine 392–valine 413. Residues glutamate 414 to isoleucine 438 are Cytoplasmic-facing. A helical transmembrane segment spans residues glutamine 439–alanine 457. At phenylalanine 458–alanine 465 the chain is on the periplasmic side. A helical transmembrane segment spans residues isoleucine 466–proline 490. At alanine 491 to threonine 538 the chain is on the cytoplasmic side. Residues glycine 539–leucine 555 traverse the membrane as a helical segment. Residues phenylalanine 556–asparagine 871 lie on the Periplasmic side of the membrane. Residues glutamine 872–leucine 888 form a helical membrane-spanning segment. Residues alanine 889–proline 898 are Cytoplasmic-facing. Residues phenylalanine 899–phenylalanine 918 traverse the membrane as a helical segment. Over arginine 919–aspartate 924 the chain is Periplasmic. Residues valine 925 to isoleucine 943 form a helical membrane-spanning segment. Topologically, residues leucine 944 to leucine 972 are cytoplasmic. A helical membrane pass occupies residues arginine 973–serine 992. The Periplasmic segment spans residues threonine 993–glycine 998. The helical transmembrane segment at alanine 999–alanine 1018 threads the bilayer. Residues isoleucine 1019–histidine 1049 lie on the Cytoplasmic side of the membrane.

Belongs to the resistance-nodulation-cell division (RND) (TC 2.A.6) family. In terms of assembly, homotrimer, with large domains that extend into the periplasm, interacts with AcrA and TolC. AcrA may be required to stably link this protein and TolC. Interacts with AcrZ. Part of the AcrA-AcrB-AcrZ-TolC efflux pump.

It localises to the cell inner membrane. AcrA-AcrB-AcrZ-TolC is a drug efflux protein complex with broad substrate specificity that uses the proton motive force to export substrates. In terms of biological role, (Microbial infection) Involved in contact-dependent growth inhibition (CDI), acts downstream of BamA, the receptor for CDI. Its role in CDI is independent of the AcrA-AcrB-TolC efflux pump complex. The chain is Multidrug efflux pump subunit AcrB (acrB) from Escherichia coli (strain K12).